We begin with the raw amino-acid sequence, 65 residues long: MNVNDLRNKTKAELKKELLELLKEQFNLRMQKGGGEAPRPHLFKRVRRDIARVKTLLGEKERNNE.

It belongs to the universal ribosomal protein uL29 family.

The polypeptide is Large ribosomal subunit protein uL29 (Coxiella burnetii (strain CbuK_Q154) (Coxiella burnetii (strain Q154))).